A 427-amino-acid chain; its full sequence is Glutamate-1-semialdehyde 2,1-aminomutase (427 aa).

Position 265 is an N6-(pyridoxal phosphate)lysine (Lys265).

The protein belongs to the class-III pyridoxal-phosphate-dependent aminotransferase family. HemL subfamily. As to quaternary structure, homodimer. Requires pyridoxal 5'-phosphate as cofactor.

The protein resides in the cytoplasm. It carries out the reaction (S)-4-amino-5-oxopentanoate = 5-aminolevulinate. It functions in the pathway porphyrin-containing compound metabolism; protoporphyrin-IX biosynthesis; 5-aminolevulinate from L-glutamyl-tRNA(Glu): step 2/2. This chain is Glutamate-1-semialdehyde 2,1-aminomutase, found in Bordetella avium (strain 197N).